Reading from the N-terminus, the 218-residue chain is Protein GrpE (218 aa).

Residues 1–75 (MTTPNGMPDN…DVDPDLDGDG (75 aa)) are disordered. Basic and acidic residues predominate over residues 23–40 (SADRAEQAAEEAAARQAE). Residues 48–75 (SEEEISPELEAEINDLLSDVDPDLDGDG) show a composition bias toward acidic residues.

Belongs to the GrpE family. Homodimer.

Its subcellular location is the cytoplasm. Participates actively in the response to hyperosmotic and heat shock by preventing the aggregation of stress-denatured proteins, in association with DnaK and GrpE. It is the nucleotide exchange factor for DnaK and may function as a thermosensor. Unfolded proteins bind initially to DnaJ; upon interaction with the DnaJ-bound protein, DnaK hydrolyzes its bound ATP, resulting in the formation of a stable complex. GrpE releases ADP from DnaK; ATP binding to DnaK triggers the release of the substrate protein, thus completing the reaction cycle. Several rounds of ATP-dependent interactions between DnaJ, DnaK and GrpE are required for fully efficient folding. This Corynebacterium glutamicum (strain ATCC 13032 / DSM 20300 / JCM 1318 / BCRC 11384 / CCUG 27702 / LMG 3730 / NBRC 12168 / NCIMB 10025 / NRRL B-2784 / 534) protein is Protein GrpE.